The sequence spans 67 residues: DNA gyrase inhibitor YacG (67 aa).

Residues Cys-10, Cys-13, Cys-29, and Cys-33 each coordinate Zn(2+). Basic and acidic residues predominate over residues 44-57 (EEKRIPSSGDRSDT). Residues 44 to 67 (EEKRIPSSGDRSDTDGWSEEENQP) are disordered.

It belongs to the DNA gyrase inhibitor YacG family. As to quaternary structure, interacts with GyrB. Requires Zn(2+) as cofactor.

In terms of biological role, inhibits all the catalytic activities of DNA gyrase by preventing its interaction with DNA. Acts by binding directly to the C-terminal domain of GyrB, which probably disrupts DNA binding by the gyrase. In Cronobacter sakazakii (strain ATCC BAA-894) (Enterobacter sakazakii), this protein is DNA gyrase inhibitor YacG.